The following is a 562-amino-acid chain: Glutamate--tRNA ligase (562 aa).

The 'HIGH' region signature appears at 101 to 111 (PEPNGYPHIGH).

Belongs to the class-I aminoacyl-tRNA synthetase family. Glutamate--tRNA ligase type 2 subfamily.

It localises to the cytoplasm. It carries out the reaction tRNA(Glu) + L-glutamate + ATP = L-glutamyl-tRNA(Glu) + AMP + diphosphate. Its function is as follows. Catalyzes the attachment of glutamate to tRNA(Glu) in a two-step reaction: glutamate is first activated by ATP to form Glu-AMP and then transferred to the acceptor end of tRNA(Glu). This Cenarchaeum symbiosum (strain A) protein is Glutamate--tRNA ligase.